Here is a 219-residue protein sequence, read N- to C-terminus: 7-cyano-7-deazaguanine synthase (219 aa).

10–20 (FSGGQDSTTCL) provides a ligand contact to ATP. Zn(2+) is bound by residues C187, C196, C199, and C202.

This sequence belongs to the QueC family. Homodimer. It depends on Zn(2+) as a cofactor.

The enzyme catalyses 7-carboxy-7-deazaguanine + NH4(+) + ATP = 7-cyano-7-deazaguanine + ADP + phosphate + H2O + H(+). It participates in purine metabolism; 7-cyano-7-deazaguanine biosynthesis. Functionally, catalyzes the ATP-dependent conversion of 7-carboxy-7-deazaguanine (CDG) to 7-cyano-7-deazaguanine (preQ(0)). The protein is 7-cyano-7-deazaguanine synthase of Lysinibacillus sphaericus (strain C3-41).